A 255-amino-acid polypeptide reads, in one-letter code: 1-(5-phosphoribosyl)-5-[(5-phosphoribosylamino)methylideneamino] imidazole-4-carboxamide isomerase (255 aa).

The Proton acceptor role is filled by aspartate 12. Residue aspartate 131 is the Proton donor of the active site.

The protein belongs to the HisA/HisF family.

It is found in the cytoplasm. It carries out the reaction 1-(5-phospho-beta-D-ribosyl)-5-[(5-phospho-beta-D-ribosylamino)methylideneamino]imidazole-4-carboxamide = 5-[(5-phospho-1-deoxy-D-ribulos-1-ylimino)methylamino]-1-(5-phospho-beta-D-ribosyl)imidazole-4-carboxamide. It participates in amino-acid biosynthesis; L-histidine biosynthesis; L-histidine from 5-phospho-alpha-D-ribose 1-diphosphate: step 4/9. The protein is 1-(5-phosphoribosyl)-5-[(5-phosphoribosylamino)methylideneamino] imidazole-4-carboxamide isomerase of Cutibacterium acnes (strain DSM 16379 / KPA171202) (Propionibacterium acnes).